The chain runs to 326 residues: Polyprenal reductase (326 aa).

Helical transmembrane passes span 26-46 (MMFG…TFVE), 84-104 (HFYT…VSTV), 167-187 (INLS…IALL), 212-232 (ILYL…NMIL), and 256-276 (LFNL…FCIA).

The protein belongs to the steroid 5-alpha reductase family. Polyprenal reductase subfamily.

The protein localises to the endoplasmic reticulum membrane. The catalysed reaction is a di-trans,poly-cis-dolichal + NADP(+) = a di-trans,poly-cis-polyprenal + NADPH + H(+). The protein operates within protein modification; protein glycosylation. Functionally, plays a key role in early steps of protein N-linked glycosylation by being involved in the conversion of polyprenol into dolichol. Acts as a polyprenal reductase that mediates the reduction of polyprenal into dolichal in a NADP-dependent mechanism. Dolichols are required for the synthesis of dolichol-linked monosaccharides and the oligosaccharide precursor used for N-glycosylation. The chain is Polyprenal reductase from Drosophila melanogaster (Fruit fly).